A 161-amino-acid polypeptide reads, in one-letter code: Phosphopantetheine adenylyltransferase (161 aa).

Residue Ser-11 participates in substrate binding. ATP-binding positions include 11 to 12 (SF) and His-19. 3 residues coordinate substrate: Lys-43, Leu-75, and Arg-89. ATP-binding positions include 90–92 (GLR), Glu-100, and 125–131 (YSYLSSS).

The protein belongs to the bacterial CoaD family. As to quaternary structure, homohexamer. Requires Mg(2+) as cofactor.

The protein localises to the cytoplasm. It catalyses the reaction (R)-4'-phosphopantetheine + ATP + H(+) = 3'-dephospho-CoA + diphosphate. It functions in the pathway cofactor biosynthesis; coenzyme A biosynthesis; CoA from (R)-pantothenate: step 4/5. Its function is as follows. Reversibly transfers an adenylyl group from ATP to 4'-phosphopantetheine, yielding dephospho-CoA (dPCoA) and pyrophosphate. The chain is Phosphopantetheine adenylyltransferase from Geobacter sp. (strain M21).